We begin with the raw amino-acid sequence, 1955 residues long: Protocadherin-15 (1955 aa).

A signal peptide spans methionine 1 to glycine 26. Over glutamine 27–alanine 1376 the chain is Extracellular. Cysteine 32 and cysteine 120 are oxidised to a cystine. Cadherin domains lie at proline 40–phenylalanine 147, lysine 148–phenylalanine 265, arginine 278–phenylalanine 395, threonine 396–phenylalanine 509, proline 510–phenylalanine 616, proline 617–phenylalanine 717, proline 719–phenylalanine 819, threonine 820–phenylalanine 926, serine 927–phenylalanine 1035, glutamine 1037–phenylalanine 1144, and glutamine 1145–leucine 1259. Residues asparagine 52, asparagine 97, and asparagine 201 are each glycosylated (N-linked (GlcNAc...) asparagine). Asparagine 419, asparagine 559, asparagine 662, asparagine 724, asparagine 768, asparagine 821, and asparagine 851 each carry an N-linked (GlcNAc...) asparagine glycan. N-linked (GlcNAc...) asparagine glycosylation is found at asparagine 1064, asparagine 1084, and asparagine 1175. A helical membrane pass occupies residues leucine 1377–valine 1397. Residues serine 1398–leucine 1955 are Cytoplasmic-facing. Pro residues predominate over residues valine 1426–glycine 1444. Disordered stretches follow at residues valine 1426–histidine 1446, glutamine 1601–asparagine 1623, cysteine 1745–alanine 1766, and isoleucine 1928–leucine 1955. A compositionally biased stretch (polar residues) spans isoleucine 1928–valine 1941.

As to quaternary structure, antiparallel heterodimer with CDH23. Found in a complex with TMIE and LHFPL5. Interacts with LHFPL5/TMHS; this interaction is required for efficient localization to hair bundles. Interacts with MYO7A. Interacts with USH1G; this interaction may recruit USH1G to the plasma membrane. Interacts with TOMT. Isoforms CD1 and CD3 interact with TMC1 (via N-terminus) and TMC2 (via N-terminus). Expressed in brain, lung, kidney, spleen and testis. Found also in the inner and outer synaptic layers, and the nerve fiber layer in adult and fetal retinas. Found in the supporting cells, outer sulcus cells and spiral ganglion of fetal cochlea. Expressed in cytotoxic tumor-derived T- and NK-cell lines as well as biopsies of nasal NK/T-cell lymphomas. Not detected in normal or in vitro activated peripheral blood cells, CD4 or CD8 lymphocytes or NK cells. Isoform 3 is expressed in brain, heart, cerebellum and kidney. CD1 isoforms, such as isoform 1, have a limited pattern of expression and is detected in testis, retina and cochlea. CD2 isoforms, such as isoforms 4 and 5, are expressed in heart, kidney, thymus, spleen, testis, retina and cochlea. CD3 isoforms, such as isoform 6, are widely expressed.

It localises to the cell membrane. Its subcellular location is the secreted. Functionally, calcium-dependent cell-adhesion protein. Essential for maintenance of normal retinal and cochlear function. The chain is Protocadherin-15 (PCDH15) from Homo sapiens (Human).